The sequence spans 385 residues: tRNA-specific 2-thiouridylase MnmA (385 aa).

ATP contacts are provided by residues Gly12 to Ser19 and Met38. The interaction with target base in tRNA stretch occupies residues Asn108–Asp110. The active-site Nucleophile is the Cys113. A disulfide bridge links Cys113 with Cys210. Residue Gly138 participates in ATP binding. The segment at Lys160 to Gln162 is interaction with tRNA. Cys210 serves as the catalytic Cysteine persulfide intermediate.

The protein belongs to the MnmA/TRMU family.

The protein resides in the cytoplasm. The enzyme catalyses S-sulfanyl-L-cysteinyl-[protein] + uridine(34) in tRNA + AH2 + ATP = 2-thiouridine(34) in tRNA + L-cysteinyl-[protein] + A + AMP + diphosphate + H(+). Its function is as follows. Catalyzes the 2-thiolation of uridine at the wobble position (U34) of tRNA, leading to the formation of s(2)U34. This is tRNA-specific 2-thiouridylase MnmA from Ureaplasma parvum serovar 3 (strain ATCC 27815 / 27 / NCTC 11736).